Reading from the N-terminus, the 113-residue chain is Dynein light chain Tctex-type 1 (113 aa).

Position 1 is an N-acetylmethionine (M1). The interval 41–113 is interaction with GNB1; sequence QWTTNVLEQT…CIVSTFGLSI (73 aa).

The protein belongs to the dynein light chain Tctex-type family. As to quaternary structure, homodimer. The cytoplasmic dynein 1 complex consists of two catalytic heavy chains (HCs) and a number of non-catalytic subunits presented by intermediate chains (ICs), light intermediate chains (LICs) and light chains (LCs); the composition seems to vary in respect to the IC, LIC and LC composition. The heavy chain homodimer serves as a scaffold for the probable homodimeric assembly of the respective non-catalytic subunits. The ICs and LICs bind directly to the HC dimer and the LCs assemble on the IC dimer. DYNLT1 and DYNLT3 compete for association with dynein IC (DYNC1I1 or DYNC1I2). Self-associates. Interacts with RHO. Interacts with DYNC1I1 and DYNC1I2. Interacts with DOC2A, DOC2B and SCN10A. Interacts with PVR. Interacts with SVIL isoform 2. Interacts with GNB1; the interaction occurs in presence of guanine nucleotide-binding protein G(T) subunit gamma; the interaction diminishes the association of DYNLT1 with dynein IC (DYNC1I1 or DYNC1I2). Interacts with GNB2, GNB3 and GNB5; the interactions occur in presence of guanine nucleotide-binding protein G(T) subunit gamma. Interacts with ACVR2B and ARHGEF2. Interacts with DNAI4. Interacts with CFAP61. Post-translationally, phosphorylated by BMPR2. The phosphorylation status is proposed to regulate the association with the cytoplasmic dynein complex and may have role in cytoplasmic dynein cargo release. As to expression, high level in testis (germ cell-specific). Expressed in sperm (at protein level). 200-fold lower in liver, brain, heart, spleen, and kidney. Levels in thymus and two embryonal carcinoma cell lines were several-fold higher than this low constitutive level.

Its subcellular location is the golgi apparatus. The protein resides in the cytoplasm. It localises to the cytoskeleton. It is found in the spindle. In terms of biological role, acts as one of several non-catalytic accessory components of the cytoplasmic dynein 1 complex that are thought to be involved in linking dynein to cargos and to adapter proteins that regulate dynein function. Cytoplasmic dynein 1 acts as a motor for the intracellular retrograde motility of vesicles and organelles along microtubules. Binds to transport cargos and is involved in apical cargo transport such as rhodopsin-bearing vesicles in polarized epithelia. May also be a accessory component of axonemal dynein. Plays an important role in male germ cell development and function. Candidate for involvement in male sterility. Plays a role in neuronal morphogenesis; the function is independent of cytoplasmic dynein and seems to be coupled to regulation of the actin cytoskeleton by enhancing Rac1 activity. The function in neurogenesis may be regulated by association with a G-protein beta-gamma dimer. May function as a receptor-independent activator of heterotrimeric G-protein signaling; the activation appears to be independent of a nucleotide exchange. Plays a role in regulating neurogenesis; inhibits the genesis of neurons from precursor cells during cortical development presumably by antagonizing ARHGEF2. Unrelated to the role in retrograde microtubule-associated movement may play a role in the dimerization of cytoplasmic proteins/domains such as for ACVR2B. Binds to the cytoplasmic domain of ACVR2B and, in vitro, inhibits ACVR2B signaling. Involved in the regulation of mitotic spindle orientation. The protein is Dynein light chain Tctex-type 1 (Dynlt1) of Mus musculus (Mouse).